A 370-amino-acid chain; its full sequence is Glutamate 5-kinase (370 aa).

Lysine 17 provides a ligand contact to ATP. Serine 57, aspartate 144, and asparagine 156 together coordinate substrate. ATP contacts are provided by residues 176–177 (SD) and 220–226 (TGGMVSK). One can recognise a PUA domain in the interval 282–360 (SGTLTLDDGA…SDLPAEMRRP (79 aa)).

Belongs to the glutamate 5-kinase family.

It is found in the cytoplasm. It carries out the reaction L-glutamate + ATP = L-glutamyl 5-phosphate + ADP. The protein operates within amino-acid biosynthesis; L-proline biosynthesis; L-glutamate 5-semialdehyde from L-glutamate: step 1/2. In terms of biological role, catalyzes the transfer of a phosphate group to glutamate to form L-glutamate 5-phosphate. This is Glutamate 5-kinase from Mycolicibacterium gilvum (strain PYR-GCK) (Mycobacterium gilvum (strain PYR-GCK)).